A 206-amino-acid polypeptide reads, in one-letter code: Large ribosomal subunit protein mL40 (206 aa).

The transit peptide at 1-46 directs the protein to the mitochondrion; that stretch reads MATAAMLCAARALRPRSWIPGTCQAQVRHTHQRASLLSFWELIPMR. The segment at 170 to 190 is disordered; it reads PFEKEGPHYTPPVPNYQAPEG.

Belongs to the mitochondrion-specific ribosomal protein mL40 family. As to quaternary structure, component of the mitochondrial ribosome large subunit (39S) which comprises a 16S rRNA and about 50 distinct proteins.

The protein resides in the mitochondrion. The chain is Large ribosomal subunit protein mL40 (Mrpl40) from Rattus norvegicus (Rat).